A 285-amino-acid chain; its full sequence is 4-hydroxybenzoate octaprenyltransferase (285 aa).

Helical transmembrane passes span 28–48 (LWAM…WIFV), 86–106 (IAAW…FALV), 110–130 (NALT…YPFF), 133–153 (FFAI…PMAF), 165–185 (WLML…YAMV), 210–230 (IMLC…LLGL), 232–252 (WPYW…YTLI), and 262–284 (AAFR…AYAI).

Belongs to the UbiA prenyltransferase family. Requires Mg(2+) as cofactor.

The protein localises to the cell inner membrane. The catalysed reaction is all-trans-octaprenyl diphosphate + 4-hydroxybenzoate = 4-hydroxy-3-(all-trans-octaprenyl)benzoate + diphosphate. It functions in the pathway cofactor biosynthesis; ubiquinone biosynthesis. Functionally, catalyzes the prenylation of para-hydroxybenzoate (PHB) with an all-trans polyprenyl group. Mediates the second step in the final reaction sequence of ubiquinone-8 (UQ-8) biosynthesis, which is the condensation of the polyisoprenoid side chain with PHB, generating the first membrane-bound Q intermediate 3-octaprenyl-4-hydroxybenzoate. In Cupriavidus necator (strain ATCC 17699 / DSM 428 / KCTC 22496 / NCIMB 10442 / H16 / Stanier 337) (Ralstonia eutropha), this protein is 4-hydroxybenzoate octaprenyltransferase.